We begin with the raw amino-acid sequence, 132 residues long: Methylglyoxal synthase (132 aa).

In terms of domain architecture, MGS-like spans 1-132 (MNIALIAHDQ…LLEWREIEDK (132 aa)). Substrate-binding residues include H8 and K12. Residue D60 is the Proton donor/acceptor of the active site. H87 contacts substrate.

This sequence belongs to the methylglyoxal synthase family.

It carries out the reaction dihydroxyacetone phosphate = methylglyoxal + phosphate. In terms of biological role, catalyzes the formation of methylglyoxal from dihydroxyacetone phosphate. The protein is Methylglyoxal synthase of Thermoanaerobacter pseudethanolicus (strain ATCC 33223 / 39E) (Clostridium thermohydrosulfuricum).